We begin with the raw amino-acid sequence, 1183 residues long: MAGQVVQYGRHRKRRNYARISEVLELPNLIEIQTKSYEWFLREGLIEMFRDISPIEDFTGNLSLEFVDYRLGEPKYDLEESKNRDATYAAPLRVKVRLIIKETGEVKEQEVFMGDFPLMTDTGTFVINGAERVIVSQLVRSPSVYFNEKIDKNGRENYDATIIPNRGAWLEYETDAKDVVYVRIDRTRKLPLTVLLRALGFSSDQEIVDLLGDNEYLRNTLEKDGTENTEQALLEIYERLRPGEPPTVENAKSLLYSRFFDPKRYDLASVGRYKTNKKLHLKHRLFNQKLAEPIVNTETGEIVVEEGTVLDRRKIDEIMDVLESNANSEVFELHGSVIDEPVEIQSIKVYVPNDDEGRTTTVIGNAFPDSEVKCITPADIIASMSYFFNLLSGIGYTDDIDHLGNRRLRSVGELLQNQFRIGLSRMERVVRERMSIQDTESITPQQLINIRPVIASIKEFFGSSQLSQFMDQANPLAELTHKRRLSALGPGGLTRERAQMEVRDVHYSHYGRMCPIETPEGPNIGLINSLSSYARVNEFGFIETPYRKVDLDTHAITDQIDYLTADEEDSYVVAQANSKLDENGRFMDDEVVCRFRGNNTVMAKEKMDYMDVSPKQVVSAATACIPFLENDDSNRALMGANMQRQAVPLMNPEAPFVGTGMEHVAARDSGAAITAKHRGRVEHVESNEILVRRLVEENGVEHEGELDRYPLAKFKRSNSGTCYNQRPIVAVGDVVEYNEILADGPSMELGEMALGRNVVVGFMTWDGYNYEDAVIMSERLVKDDVYTSIHIEEYESEARDTKLGPEEITRDIPNVSESALKNLDDRGIVYIGAEVKDGDILVGKVTPKGVTELTAEERLLHAIFGEKAREVRDTSLRVPHGAGGIVLDVKVFNREEGDDTLSPGVNQLVRVYIVQKRKIHVGDKMCGRHGNKGVISKIVPEEDMPYLPDGRPIDIMLNPLGVPSRMNIGQVLELHLGMAAKNLGIHVASPVFDGANDDDVWSTIEEAGMARDGKTVLYDGRTGEPFDNRISVGVMYMLKLAHMVDDKLHARSTGPYSLVTQQPLGGKAQFGGQRFGEMEVWALEAYGAAYTLQEILTYKSDDTVGRVKTYEAIVKGENISRPSVPESFRVLMKELQSLGLDVKVMDEQDNEIEMTDVDDDDVVERKVDLQQNDAPETQKEVTD.

It belongs to the RNA polymerase beta chain family. In terms of assembly, the RNAP catalytic core consists of 2 alpha, 1 beta, 1 beta' and 1 omega subunit. When a sigma factor is associated with the core the holoenzyme is formed, which can initiate transcription.

The catalysed reaction is RNA(n) + a ribonucleoside 5'-triphosphate = RNA(n+1) + diphosphate. In terms of biological role, DNA-dependent RNA polymerase catalyzes the transcription of DNA into RNA using the four ribonucleoside triphosphates as substrates. The polypeptide is DNA-directed RNA polymerase subunit beta (Staphylococcus aureus (strain Mu3 / ATCC 700698)).